The primary structure comprises 320 residues: Annexin A5 (320 aa).

An N-acetylalanine modification is found at Ala2. Annexin repeat units lie at residues Phe15–Lys86, Pro87–Gln158, Ala170–Lys242, and Ser246–Gly317. Residue Lys29 forms a Glycyl lysine isopeptide (Lys-Gly) (interchain with G-Cter in SUMO1); alternate linkage. Residue Lys29 forms a Glycyl lysine isopeptide (Lys-Gly) (interchain with G-Cter in SUMO2); alternate linkage. Phosphoserine is present on Ser37. N6-acetyllysine occurs at positions 70, 76, 79, 97, and 101. Lys290 is modified (N6-succinyllysine). Positions Leu314 to Asp320 match the [IL]-x-C-x-x-[DE] motif motif.

The protein belongs to the annexin family. As to quaternary structure, monomer. Binds ATRX and EIF5B. Post-translationally, S-nitrosylation is induced by interferon-gamma and oxidatively-modified low-densitity lipoprotein (LDL(ox)) possibly implicating the iNOS-S100A8/9 transnitrosylase complex.

In terms of biological role, this protein is an anticoagulant protein that acts as an indirect inhibitor of the thromboplastin-specific complex, which is involved in the blood coagulation cascade. This chain is Annexin A5 (ANXA5), found in Macaca fascicularis (Crab-eating macaque).